The primary structure comprises 732 residues: Catalase-peroxidase (732 aa).

A disordered region spans residues 1–26; sequence MADNKKSPETGGITMQIPGKGRTNRD. Residues 96–219 constitute a cross-link (tryptophyl-tyrosyl-methioninium (Trp-Tyr) (with M-245)); the sequence is WHSAGTYRTF…LAAVQMGLIY (124 aa). Histidine 97 (proton acceptor) is an active-site residue. The tryptophyl-tyrosyl-methioninium (Tyr-Met) (with W-96) cross-link spans 219 to 245; it reads YVNPEGPDGNPDPVAAARDIREVFARM. Position 260 (histidine 260) interacts with heme b. Residues 344-365 form a disordered region; it reads KPKGEAGAGTVPDPHDPKKRHA.

Belongs to the peroxidase family. Peroxidase/catalase subfamily. As to quaternary structure, homodimer or homotetramer. Heme b is required as a cofactor. Post-translationally, formation of the three residue Trp-Tyr-Met cross-link is important for the catalase, but not the peroxidase activity of the enzyme.

The enzyme catalyses H2O2 + AH2 = A + 2 H2O. The catalysed reaction is 2 H2O2 = O2 + 2 H2O. Its function is as follows. Bifunctional enzyme with both catalase and broad-spectrum peroxidase activity. The polypeptide is Catalase-peroxidase (Methanospirillum hungatei JF-1 (strain ATCC 27890 / DSM 864 / NBRC 100397 / JF-1)).